The primary structure comprises 305 residues: Flavin-dependent thymidylate synthase (305 aa).

A ThyX domain is found at 50–261 (GFVRLIDYLG…PCATASFENH (212 aa)). FAD-binding positions include S96, 119–121 (RHR), and E127. DUMP contacts are provided by residues 116-119 (QWMR), 127-131 (EVSSR), and R200. A ThyX motif motif is present at residues 119-129 (RHRTARISEVS). Residues 216-218 (DLH) and H222 each bind FAD. R227 is a binding site for dUMP. The active-site Involved in ionization of N3 of dUMP, leading to its activation is the R227.

This sequence belongs to the thymidylate synthase ThyX family. In terms of assembly, homotetramer. FAD serves as cofactor.

It catalyses the reaction dUMP + (6R)-5,10-methylene-5,6,7,8-tetrahydrofolate + NADPH + H(+) = dTMP + (6S)-5,6,7,8-tetrahydrofolate + NADP(+). The protein operates within pyrimidine metabolism; dTTP biosynthesis. In terms of biological role, catalyzes the reductive methylation of 2'-deoxyuridine-5'-monophosphate (dUMP) to 2'-deoxythymidine-5'-monophosphate (dTMP) while utilizing 5,10-methylenetetrahydrofolate (mTHF) as the methyl donor, and NADPH and FADH(2) as the reductant. The protein is Flavin-dependent thymidylate synthase of Treponema pallidum (strain Nichols).